A 466-amino-acid chain; its full sequence is MTGDKLSNQMWGGRFAAGPAAIMEEINASIDFDQKLYRQDIEGSLSHAAMLAQTKIISHSDYEKIVHGLQLIRQEIETGSFTFSRKLEDIHMNIEARLSELIGPVAGRLHTARSRNDQVAVDFRLWVREAAQKIAQALKDLMEQLLMRAEQHADTLMPGFTHLQTAQPVTFGHYMMAYVEMFGRDLSRMRDAIERMNESPLGAAALAGTGFPIDRFMTAQALGFREPTRNSIDSVSDRDFALEFLSAGALCAMHLSRLAEEIILWSSAQFHFIRLSDAFSTGSSIMPQKRNPDAAELVRAKAGRLNAALMGLLTVMKGLPLAYSKDMQEDKEYVFDGVLNLELSLAAMMGIISDLEVNKEAMKQAAGSGYAIATDLADWCVRELGLPFREAHHITGRAVALAEQKKCSLDELSLDEFQTLHPDINAAVFDVLTIEKSVESRNSFGGTAPSEVLRQVAYWKQHLVTA.

This sequence belongs to the lyase 1 family. Argininosuccinate lyase subfamily.

The protein localises to the cytoplasm. It carries out the reaction 2-(N(omega)-L-arginino)succinate = fumarate + L-arginine. The protein operates within amino-acid biosynthesis; L-arginine biosynthesis; L-arginine from L-ornithine and carbamoyl phosphate: step 3/3. This chain is Argininosuccinate lyase, found in Bartonella bacilliformis (strain ATCC 35685 / KC583 / Herrer 020/F12,63).